Consider the following 321-residue polypeptide: Capsid protein (321 aa).

The disordered stretch occupies residues 1-43; sequence MSGEQTEQISKDKAVAAEQARKEQIAEGKKAAESPEVERRKKN. Residues 9-39 show a composition bias toward basic and acidic residues; that stretch reads ISKDKAVAAEQARKEQIAEGKKAAESPEVER.

This sequence belongs to the potexviruses coat protein family.

The protein localises to the virion. Its function is as follows. Required for genome encapsidation. Forms ribonucleoprotein complexes along with TGB1 helicase and viral RNA. The polypeptide is Capsid protein (Poplar mosaic virus (isolate ATCC Pv275) (PMV)).